The following is a 202-amino-acid chain: Dephospho-CoA kinase (202 aa).

One can recognise a DPCK domain in the interval 6–202 (KVSITGDLSS…EYFYALKGAL (197 aa)). Residue 14 to 19 (SSGKTE) participates in ATP binding.

The protein belongs to the CoaE family.

The protein localises to the cytoplasm. The catalysed reaction is 3'-dephospho-CoA + ATP = ADP + CoA + H(+). Its pathway is cofactor biosynthesis; coenzyme A biosynthesis; CoA from (R)-pantothenate: step 5/5. Catalyzes the phosphorylation of the 3'-hydroxyl group of dephosphocoenzyme A to form coenzyme A. This is Dephospho-CoA kinase from Chlamydia pneumoniae (Chlamydophila pneumoniae).